Reading from the N-terminus, the 357-residue chain is Dihydroorotate dehydrogenase (quinone) (357 aa).

FMN contacts are provided by residues 67 to 71 (AGFDK) and T91. K71 lines the substrate pocket. 116–120 (NRMGF) is a substrate binding site. Residues N153 and N186 each coordinate FMN. Substrate is bound at residue N186. The active-site Nucleophile is S189. N191 lines the substrate pocket. Positions 228 and 256 each coordinate FMN. Residue 257-258 (NT) coordinates substrate. Residues G282, G311, and 332–333 (YT) contribute to the FMN site.

The protein belongs to the dihydroorotate dehydrogenase family. Type 2 subfamily. As to quaternary structure, monomer. The cofactor is FMN.

It localises to the cell membrane. It carries out the reaction (S)-dihydroorotate + a quinone = orotate + a quinol. It functions in the pathway pyrimidine metabolism; UMP biosynthesis via de novo pathway; orotate from (S)-dihydroorotate (quinone route): step 1/1. Catalyzes the conversion of dihydroorotate to orotate with quinone as electron acceptor. This chain is Dihydroorotate dehydrogenase (quinone), found in Arthrobacter sp. (strain FB24).